Reading from the N-terminus, the 351-residue chain is Phosphoribosylformylglycinamidine cyclo-ligase (351 aa).

This sequence belongs to the AIR synthase family.

It localises to the cytoplasm. It carries out the reaction 2-formamido-N(1)-(5-O-phospho-beta-D-ribosyl)acetamidine + ATP = 5-amino-1-(5-phospho-beta-D-ribosyl)imidazole + ADP + phosphate + H(+). Its pathway is purine metabolism; IMP biosynthesis via de novo pathway; 5-amino-1-(5-phospho-D-ribosyl)imidazole from N(2)-formyl-N(1)-(5-phospho-D-ribosyl)glycinamide: step 2/2. The chain is Phosphoribosylformylglycinamidine cyclo-ligase from Xylella fastidiosa (strain Temecula1 / ATCC 700964).